A 442-amino-acid polypeptide reads, in one-letter code: ATP-dependent protease ATPase subunit HslU (442 aa).

ATP is bound by residues I18, 60–65 (GVGKTE), D255, E320, and R392.

The protein belongs to the ClpX chaperone family. HslU subfamily. A double ring-shaped homohexamer of HslV is capped on each side by a ring-shaped HslU homohexamer. The assembly of the HslU/HslV complex is dependent on binding of ATP.

It localises to the cytoplasm. Functionally, ATPase subunit of a proteasome-like degradation complex; this subunit has chaperone activity. The binding of ATP and its subsequent hydrolysis by HslU are essential for unfolding of protein substrates subsequently hydrolyzed by HslV. HslU recognizes the N-terminal part of its protein substrates and unfolds these before they are guided to HslV for hydrolysis. The protein is ATP-dependent protease ATPase subunit HslU of Aeromonas salmonicida (strain A449).